The primary structure comprises 89 residues: Protein WFDC9 (89 aa).

The first 23 residues, 1–23 (MKPWILLLVMFISGVVMLLPVLG), serve as a signal peptide directing secretion.

It localises to the secreted. The sequence is that of Protein WFDC9 (WFDC9) from Homo sapiens (Human).